The sequence spans 286 residues: Puff II/9-2 protein (286 aa).

Residues 1–19 form the signal peptide; it reads MKQFIVLTVVLLAIQELQG. The tract at residues 61–235 is helical; the sequence is IDGLKKENNI…EKDLNTLRCE (175 aa). A glycan (N-linked (GlcNAc...) asparagine) is linked at asparagine 156.

This is Puff II/9-2 protein (II/9-2) from Bradysia coprophila (Dark-winged fungus gnat).